The chain runs to 200 residues: Small ribosomal subunit protein uS4 (200 aa).

The segment at 22-42 is disordered; it reads TGKELEKRPYAPGPHGPNQRK. Residues 92–152 enclose the S4 RNA-binding domain; it reads ARLDNLVYRM…EKSNNLVVVK (61 aa).

This sequence belongs to the universal ribosomal protein uS4 family. Part of the 30S ribosomal subunit. Contacts protein S5. The interaction surface between S4 and S5 is involved in control of translational fidelity.

Functionally, one of the primary rRNA binding proteins, it binds directly to 16S rRNA where it nucleates assembly of the body of the 30S subunit. With S5 and S12 plays an important role in translational accuracy. The protein is Small ribosomal subunit protein uS4 of Bacillus thuringiensis subsp. konkukian (strain 97-27).